An 807-amino-acid polypeptide reads, in one-letter code: Phenylalanine--tRNA ligase beta subunit (807 aa).

Positions 39-156 (AGEFSGVVIG…SDAPLGQCVR (118 aa)) constitute a tRNA-binding domain. Positions 409-488 (PQTKDVNLRR…RIFGYNNIPN (80 aa)) constitute a B5 domain. Positions 466, 472, 475, and 476 each coordinate Mg(2+). One can recognise an FDX-ACB domain in the interval 713-806 (SRFPANRRDL…LKTELNASLR (94 aa)).

The protein belongs to the phenylalanyl-tRNA synthetase beta subunit family. Type 1 subfamily. As to quaternary structure, tetramer of two alpha and two beta subunits. Mg(2+) serves as cofactor.

The protein resides in the cytoplasm. The enzyme catalyses tRNA(Phe) + L-phenylalanine + ATP = L-phenylalanyl-tRNA(Phe) + AMP + diphosphate + H(+). This is Phenylalanine--tRNA ligase beta subunit from Colwellia psychrerythraea (strain 34H / ATCC BAA-681) (Vibrio psychroerythus).